We begin with the raw amino-acid sequence, 693 residues long: Elongation factor G (693 aa).

The tr-type G domain maps to 8-284; that stretch reads HMVRNIGIAA…AVIDYLPAPD (277 aa). GTP-binding positions include 17 to 24, 81 to 85, and 135 to 138; these read AHIDAGKT, DTPGH, and NKMD.

The protein belongs to the TRAFAC class translation factor GTPase superfamily. Classic translation factor GTPase family. EF-G/EF-2 subfamily.

Its subcellular location is the cytoplasm. Functionally, catalyzes the GTP-dependent ribosomal translocation step during translation elongation. During this step, the ribosome changes from the pre-translocational (PRE) to the post-translocational (POST) state as the newly formed A-site-bound peptidyl-tRNA and P-site-bound deacylated tRNA move to the P and E sites, respectively. Catalyzes the coordinated movement of the two tRNA molecules, the mRNA and conformational changes in the ribosome. In Nautilia profundicola (strain ATCC BAA-1463 / DSM 18972 / AmH), this protein is Elongation factor G.